Reading from the N-terminus, the 580-residue chain is Arginine--tRNA ligase (580 aa).

A 'HIGH' region motif is present at residues 123–133 (PNIAKEMHVGH).

Belongs to the class-I aminoacyl-tRNA synthetase family. As to quaternary structure, monomer.

The protein resides in the cytoplasm. It catalyses the reaction tRNA(Arg) + L-arginine + ATP = L-arginyl-tRNA(Arg) + AMP + diphosphate. The chain is Arginine--tRNA ligase (argS) from Buchnera aphidicola subsp. Schizaphis graminum (strain Sg).